A 542-amino-acid chain; its full sequence is Chaperonin GroEL (542 aa).

Residues 29-32 (TLGP), 86-90 (DGTTT), G414, and D491 contribute to the ATP site.

It belongs to the chaperonin (HSP60) family. As to quaternary structure, forms a cylinder of 14 subunits composed of two heptameric rings stacked back-to-back. Interacts with the co-chaperonin GroES.

It is found in the cytoplasm. The enzyme catalyses ATP + H2O + a folded polypeptide = ADP + phosphate + an unfolded polypeptide.. Its function is as follows. Together with its co-chaperonin GroES, plays an essential role in assisting protein folding. The GroEL-GroES system forms a nano-cage that allows encapsulation of the non-native substrate proteins and provides a physical environment optimized to promote and accelerate protein folding. This chain is Chaperonin GroEL, found in Desulforamulus reducens (strain ATCC BAA-1160 / DSM 100696 / MI-1) (Desulfotomaculum reducens).